A 456-amino-acid polypeptide reads, in one-letter code: MTLTALNAISPIDGRYVNKTRALSPYFSEFALTYYRLMVEIKWFESLAANDTIPEVPALDNKARKFLSDLISNFNESEAEKIKEFEKQTNHDVKAVEYYLQDKFQENEQLKSCVAFIHFACTSEDINNLAYALMIKQAIAQVIQPTIAEIMGSITLLGKQHADVAMLSRTHGQPATPTTMGKELVNFVARLKRPQQQLAEVLIPAKFNGAVGNYNAHVAAYPEVDWRKHCANFVTSLGLSFNAYTTQIEPHDGIAEVSQIMVRINNILLDYTQDIWSYISLGYFKQKTIAEEVGSSTMPHKVNPIDFENAEGNLGLSNALFIHFANKLTQSRMQRDLSDSTVLRNLGVAFSYSLIAYHSVAKGNDKLQINKSALQKDLSENWEVLAEAIQTVMRRYNEPNAYEQLKELTRGQMIDAENLKKFIKTLSIPEEAKAELMKLTPETYTGLATQLVKAFS.

N(6)-(1,2-dicarboxyethyl)-AMP-binding positions include 15–16 (RY), 90–92 (NHD), and 122–123 (TS). His171 (proton donor/acceptor) is an active-site residue. Gln247 serves as a coordination point for N(6)-(1,2-dicarboxyethyl)-AMP. Residue Ser295 is the Proton donor/acceptor of the active site. N(6)-(1,2-dicarboxyethyl)-AMP-binding positions include Ser296, 301 to 303 (KVN), Asn309, Arg335, and 340 to 344 (STVLR).

The protein belongs to the lyase 1 family. Adenylosuccinate lyase subfamily. Homotetramer. Residues from neighboring subunits contribute catalytic and substrate-binding residues to each active site.

It catalyses the reaction N(6)-(1,2-dicarboxyethyl)-AMP = fumarate + AMP. The catalysed reaction is (2S)-2-[5-amino-1-(5-phospho-beta-D-ribosyl)imidazole-4-carboxamido]succinate = 5-amino-1-(5-phospho-beta-D-ribosyl)imidazole-4-carboxamide + fumarate. It participates in purine metabolism; AMP biosynthesis via de novo pathway; AMP from IMP: step 2/2. The protein operates within purine metabolism; IMP biosynthesis via de novo pathway; 5-amino-1-(5-phospho-D-ribosyl)imidazole-4-carboxamide from 5-amino-1-(5-phospho-D-ribosyl)imidazole-4-carboxylate: step 2/2. In terms of biological role, catalyzes two reactions in de novo purine nucleotide biosynthesis. Catalyzes the breakdown of 5-aminoimidazole- (N-succinylocarboxamide) ribotide (SAICAR or 2-[5-amino-1-(5-phospho-beta-D-ribosyl)imidazole-4-carboxamido]succinate) to 5-aminoimidazole-4-carboxamide ribotide (AICAR or 5-amino-1-(5-phospho-beta-D-ribosyl)imidazole-4-carboxamide) and fumarate, and of adenylosuccinate (ADS or N(6)-(1,2-dicarboxyethyl)-AMP) to adenosine monophosphate (AMP) and fumarate. This is Adenylosuccinate lyase (purB) from Legionella pneumophila subsp. pneumophila (strain Philadelphia 1 / ATCC 33152 / DSM 7513).